Here is a 209-residue protein sequence, read N- to C-terminus: Thiamine-phosphate synthase 1 (209 aa).

4-amino-2-methyl-5-(diphosphooxymethyl)pyrimidine-binding positions include Gln39–Lys43 and Asn74. Mg(2+) is bound by residues Asp75 and Asp94. A 4-amino-2-methyl-5-(diphosphooxymethyl)pyrimidine-binding site is contributed by Ser112. Thr138 to Ser140 is a binding site for 2-[(2R,5Z)-2-carboxy-4-methylthiazol-5(2H)-ylidene]ethyl phosphate. 4-amino-2-methyl-5-(diphosphooxymethyl)pyrimidine is bound at residue Lys141. 2-[(2R,5Z)-2-carboxy-4-methylthiazol-5(2H)-ylidene]ethyl phosphate contacts are provided by residues Gly170 and Ile190–Ser191.

This sequence belongs to the thiamine-phosphate synthase family. The cofactor is Mg(2+).

The enzyme catalyses 2-[(2R,5Z)-2-carboxy-4-methylthiazol-5(2H)-ylidene]ethyl phosphate + 4-amino-2-methyl-5-(diphosphooxymethyl)pyrimidine + 2 H(+) = thiamine phosphate + CO2 + diphosphate. It catalyses the reaction 2-(2-carboxy-4-methylthiazol-5-yl)ethyl phosphate + 4-amino-2-methyl-5-(diphosphooxymethyl)pyrimidine + 2 H(+) = thiamine phosphate + CO2 + diphosphate. It carries out the reaction 4-methyl-5-(2-phosphooxyethyl)-thiazole + 4-amino-2-methyl-5-(diphosphooxymethyl)pyrimidine + H(+) = thiamine phosphate + diphosphate. It participates in cofactor biosynthesis; thiamine diphosphate biosynthesis; thiamine phosphate from 4-amino-2-methyl-5-diphosphomethylpyrimidine and 4-methyl-5-(2-phosphoethyl)-thiazole: step 1/1. In terms of biological role, condenses 4-methyl-5-(beta-hydroxyethyl)thiazole monophosphate (THZ-P) and 2-methyl-4-amino-5-hydroxymethyl pyrimidine pyrophosphate (HMP-PP) to form thiamine monophosphate (TMP). The protein is Thiamine-phosphate synthase 1 of Streptococcus pneumoniae serotype 4 (strain ATCC BAA-334 / TIGR4).